Consider the following 232-residue polypeptide: GTP cyclohydrolase 1 (232 aa).

The tract at residues 1–24 is disordered; it reads MSDNLKSYQDNHIENEDEEIYERS. The Zn(2+) site is built by Cys-121, His-124, and Cys-192.

This sequence belongs to the GTP cyclohydrolase I family. As to quaternary structure, toroid-shaped homodecamer, composed of two pentamers of five dimers.

It catalyses the reaction GTP + H2O = 7,8-dihydroneopterin 3'-triphosphate + formate + H(+). It functions in the pathway cofactor biosynthesis; 7,8-dihydroneopterin triphosphate biosynthesis; 7,8-dihydroneopterin triphosphate from GTP: step 1/1. First enzyme in the biosynthesis of tetrahydrobiopterin (BH4). Catalyzes the conversion of GTP into dihydroneopterin triphosphate (7,8-dihydroneopterin 3'-triphosphate), which is subsequently catalyzed by 6-pyruvoyltetrahydropterin synthase (ptsA) and sepiapterin reductase (sprA). This chain is GTP cyclohydrolase 1 (gchA), found in Dictyostelium discoideum (Social amoeba).